The primary structure comprises 118 residues: BLOC-1-related complex subunit 8 (118 aa).

The segment covering 98–107 (KEQISNSQGR) has biased composition (polar residues). The disordered stretch occupies residues 98–118 (KEQISNSQGRSPHVSAPSASS).

This sequence belongs to the BORCS8 family.

The protein localises to the lysosome membrane. As part of a BORC-like complex, it may play a role in the movement and localization of lysosomes at the cell periphery. Associated with the cytosolic face of lysosomes, this complex may couple lysosomes to microtubule plus-end-directed kinesin motors, driving lysosome movement toward the cell periphery. The polypeptide is BLOC-1-related complex subunit 8 (Tetraodon nigroviridis (Spotted green pufferfish)).